A 517-amino-acid polypeptide reads, in one-letter code: Peptide chain release factor 3 (517 aa).

The tr-type G domain occupies 9 to 269 (AKRRTFAIIS…DFVEHAPAPR (261 aa)). Residues 18–25 (SHPDAGKT), 86–90 (DTPGH), and 140–143 (NKLD) contribute to the GTP site.

This sequence belongs to the TRAFAC class translation factor GTPase superfamily. Classic translation factor GTPase family. PrfC subfamily.

Its subcellular location is the cytoplasm. Increases the formation of ribosomal termination complexes and stimulates activities of RF-1 and RF-2. It binds guanine nucleotides and has strong preference for UGA stop codons. It may interact directly with the ribosome. The stimulation of RF-1 and RF-2 is significantly reduced by GTP and GDP, but not by GMP. In Halorhodospira halophila (strain DSM 244 / SL1) (Ectothiorhodospira halophila (strain DSM 244 / SL1)), this protein is Peptide chain release factor 3.